Here is a 433-residue protein sequence, read N- to C-terminus: Adenylosuccinate synthetase (433 aa).

GTP-binding positions include 11–17 and 39–41; these read GDEGKGK and GHT. D12 serves as the catalytic Proton acceptor. 2 residues coordinate Mg(2+): D12 and G39. IMP is bound by residues 12–15, 37–40, T134, R148, N230, T245, and R309; these read DEGK and NAGH. H40 (proton donor) is an active-site residue. 305–311 contributes to the substrate binding site; the sequence is VTTGRKR. GTP-binding positions include R311, 337–339, and 419–421; these read KLD and GTG.

It belongs to the adenylosuccinate synthetase family. As to quaternary structure, homodimer. Mg(2+) serves as cofactor.

The protein localises to the cytoplasm. The enzyme catalyses IMP + L-aspartate + GTP = N(6)-(1,2-dicarboxyethyl)-AMP + GDP + phosphate + 2 H(+). It functions in the pathway purine metabolism; AMP biosynthesis via de novo pathway; AMP from IMP: step 1/2. Functionally, plays an important role in the de novo pathway and in the salvage pathway of purine nucleotide biosynthesis. Catalyzes the first committed step in the biosynthesis of AMP from IMP. This is Adenylosuccinate synthetase from Saccharomyces cerevisiae (strain AWRI1631) (Baker's yeast).